The following is a 359-amino-acid chain: Tropomodulin-1 (359 aa).

Residues 36–61 (ELDPDNALLPAGLRQKDQTTKAPTGP) are disordered. A tropomyosin-binding region spans residues 39 to 138 (PDNALLPAGL…CDIAAILGMH (100 aa)).

This sequence belongs to the tropomodulin family. As to quaternary structure, binds to the N-terminus of tropomyosin and to actin. Interacts with FLII.

The protein resides in the cytoplasm. Its subcellular location is the cytoskeleton. Its function is as follows. Blocks the elongation and depolymerization of the actin filaments at the pointed end. The Tmod/TM complex contributes to the formation of the short actin protofilament, which in turn defines the geometry of the membrane skeleton. In Rattus norvegicus (Rat), this protein is Tropomodulin-1 (Tmod1).